Reading from the N-terminus, the 2513-residue chain is Probable polyketide synthase 7 (2513 aa).

Residues glutamate 11–glutamate 441 form the Ketosynthase family 3 (KS3) domain. Active-site for beta-ketoacyl synthase activity residues include cysteine 181, histidine 323, and histidine 362. An acyl/malonyl transferase region spans residues glycine 632 to tyrosine 665. Serine 642 functions as the For acyl/malonyl transferase activity in the catalytic mechanism. The tract at residues isoleucine 922–asparagine 1044 is N-terminal hotdog fold. In terms of domain architecture, PKS/mFAS DH spans isoleucine 922–serine 1206. Residue histidine 956 is the Proton acceptor; for dehydratase activity of the active site. The segment at asparagine 1061–serine 1206 is C-terminal hotdog fold. The Proton donor; for dehydratase activity role is filled by aspartate 1119. Residues isoleucine 2426–leucine 2503 form the Carrier domain. An O-(pantetheine 4'-phosphoryl)serine modification is found at serine 2463.

The cofactor is pantetheine 4'-phosphate.

In terms of biological role, probable polyketide synthase. The polypeptide is Probable polyketide synthase 7 (pks7) (Dictyostelium discoideum (Social amoeba)).